Consider the following 570-residue polypeptide: Proline--tRNA ligase (570 aa).

Belongs to the class-II aminoacyl-tRNA synthetase family. ProS type 1 subfamily. Homodimer.

It is found in the cytoplasm. It catalyses the reaction tRNA(Pro) + L-proline + ATP = L-prolyl-tRNA(Pro) + AMP + diphosphate. Its function is as follows. Catalyzes the attachment of proline to tRNA(Pro) in a two-step reaction: proline is first activated by ATP to form Pro-AMP and then transferred to the acceptor end of tRNA(Pro). As ProRS can inadvertently accommodate and process non-cognate amino acids such as alanine and cysteine, to avoid such errors it has two additional distinct editing activities against alanine. One activity is designated as 'pretransfer' editing and involves the tRNA(Pro)-independent hydrolysis of activated Ala-AMP. The other activity is designated 'posttransfer' editing and involves deacylation of mischarged Ala-tRNA(Pro). The misacylated Cys-tRNA(Pro) is not edited by ProRS. The protein is Proline--tRNA ligase of Pelotomaculum thermopropionicum (strain DSM 13744 / JCM 10971 / SI).